Reading from the N-terminus, the 200-residue chain is Imidazoleglycerol-phosphate dehydratase (200 aa).

Substrate is bound by residues glutamate 13, 39-47 (HMLTLLTFH), 68-72 (HHLIE), arginine 94, and arginine 116. Positions 39, 68, 69, and 72 each coordinate Mn(2+). Glutamate 141, histidine 165, histidine 166, and glutamate 169 together coordinate Mn(2+). Substrate contacts are provided by residues 165–173 (HHIIEGMFK) and 195–197 (SSK).

This sequence belongs to the imidazoleglycerol-phosphate dehydratase family. Mn(2+) serves as cofactor.

It is found in the cytoplasm. The enzyme catalyses D-erythro-1-(imidazol-4-yl)glycerol 3-phosphate = 3-(imidazol-4-yl)-2-oxopropyl phosphate + H2O. It participates in amino-acid biosynthesis; L-histidine biosynthesis; L-histidine from 5-phospho-alpha-D-ribose 1-diphosphate: step 6/9. The chain is Imidazoleglycerol-phosphate dehydratase (hisB) from Lactococcus lactis subsp. lactis (strain IL1403) (Streptococcus lactis).